A 156-amino-acid chain; its full sequence is SsrA-binding protein (156 aa).

The protein belongs to the SmpB family.

The protein resides in the cytoplasm. Its function is as follows. Required for rescue of stalled ribosomes mediated by trans-translation. Binds to transfer-messenger RNA (tmRNA), required for stable association of tmRNA with ribosomes. tmRNA and SmpB together mimic tRNA shape, replacing the anticodon stem-loop with SmpB. tmRNA is encoded by the ssrA gene; the 2 termini fold to resemble tRNA(Ala) and it encodes a 'tag peptide', a short internal open reading frame. During trans-translation Ala-aminoacylated tmRNA acts like a tRNA, entering the A-site of stalled ribosomes, displacing the stalled mRNA. The ribosome then switches to translate the ORF on the tmRNA; the nascent peptide is terminated with the 'tag peptide' encoded by the tmRNA and targeted for degradation. The ribosome is freed to recommence translation, which seems to be the essential function of trans-translation. This Bacillus velezensis (strain DSM 23117 / BGSC 10A6 / LMG 26770 / FZB42) (Bacillus amyloliquefaciens subsp. plantarum) protein is SsrA-binding protein.